The sequence spans 289 residues: Shikimate dehydrogenase (NADP(+)) (289 aa).

Shikimate is bound by residues Ser22 to Ser24 and Thr69. The active-site Proton acceptor is the Lys73. NADP(+) is bound at residue Glu85. The shikimate site is built by Asn94 and Asp109. NADP(+) is bound by residues Gly134–Ala138, Asn158–Arg163, and Ile226. Residue Tyr228 participates in shikimate binding. Residue Gly249 coordinates NADP(+).

The protein belongs to the shikimate dehydrogenase family. In terms of assembly, homodimer.

The catalysed reaction is shikimate + NADP(+) = 3-dehydroshikimate + NADPH + H(+). The protein operates within metabolic intermediate biosynthesis; chorismate biosynthesis; chorismate from D-erythrose 4-phosphate and phosphoenolpyruvate: step 4/7. Its function is as follows. Involved in the biosynthesis of the chorismate, which leads to the biosynthesis of aromatic amino acids. Catalyzes the reversible NADPH linked reduction of 3-dehydroshikimate (DHSA) to yield shikimate (SA). The chain is Shikimate dehydrogenase (NADP(+)) from Brucella ovis (strain ATCC 25840 / 63/290 / NCTC 10512).